Here is a 234-residue protein sequence, read N- to C-terminus: MRFLRGFVFSLAFTLYKVTATAEIGSEINVENEAPPDGLSWEEWHMDHEHQLKDYTPETFFALHDIKKKGFLDENDILSLYGLNREEIVGAGDGMGQHDESEKIDNEMAKRVVSLIMRLLDVDDNTKITKEEYLQFAKRGNKFPDLGVGVGHHSDFELEYEIHHWNKFHKDKDPDVKVVHKEDIEHELLHHEHEIEHEEEIQRGASRATVITDDELESRIELKNIPEKFKNGIF.

The N-terminal stretch at 1–22 (MRFLRGFVFSLAFTLYKVTATA) is a signal peptide. EF-hand domains lie at 52–87 (LKDYTPETFFALHDIKKKGFLDENDILSLYGLNREE) and 108–143 (MAKRVVSLIMRLLDVDDNTKITKEEYLQFAKRGNKF). Thr212 is modified (phosphothreonine).

The polypeptide is Protein SSP120 (SSP120) (Saccharomyces cerevisiae (strain ATCC 204508 / S288c) (Baker's yeast)).